Here is a 418-residue protein sequence, read N- to C-terminus: Protein FAM53A (418 aa).

2 disordered regions span residues 198 to 236 (TSPV…FNPR) and 248 to 269 (ETGN…LSRR). Positions 205–229 (SSASSGFVDSSEGSTSSSTRWNSGG) are enriched in low complexity. Polar residues predominate over residues 248–265 (ETGNLLPSANSTPTSTPE). Positions 285-293 (KKSRLKRRR) match the Nuclear localization signal motif.

It belongs to the FAM53 family.

The protein localises to the nucleus. May play an important role in neural development; the dorsomedial roof of the third ventricle. The polypeptide is Protein FAM53A (Gallus gallus (Chicken)).